The sequence spans 494 residues: Solute carrier family 2, facilitated glucose transporter member 3 (494 aa).

The Cytoplasmic segment spans residues 1 to 10 (MGTTKVTPYL). A helical membrane pass occupies residues 11–32 (IFATSVAAIGSFQFGYNTGVIN). The Extracellular segment spans residues 33–64 (APEMIIRDFLNYTLDEKLDEPPSRLLLTNLWS). An N-linked (GlcNAc...) asparagine glycan is attached at asparagine 43. Residues 65–84 (LSVAIFSVGGMIGSFSVGLF) form a helical membrane-spanning segment. Residues 85–89 (NRFGR) lie on the Cytoplasmic side of the membrane. The chain crosses the membrane as a helical span at residues 90–110 (RNSMLIVNLLAVIGGCLMGFC). Residues 111 to 117 (KISESVE) are Extracellular-facing. Residues 118-141 (MLILGRLVIGVFCGLCTGFVPMYI) traverse the membrane as a helical segment. The Cytoplasmic portion of the chain corresponds to 142-152 (GEISPTALRGA). Residues 153–173 (FGTLNQLGIVIGILVAQIFGL) traverse the membrane as a helical segment. Glutamine 158 is a D-glucose binding site. The Extracellular portion of the chain corresponds to 174-182 (EIILGSEVL). The chain crosses the membrane as a helical span at residues 183–203 (WPVLLGFTIIPAILQSAALPF). At 204–268 (CPESPRFLLI…LFRAPSYRQP (65 aa)) the chain is on the cytoplasmic side. Phosphothreonine is present on threonine 231. Residues 269 to 289 (IIISIVLQLSQQLSGINAVFY) form a helical membrane-spanning segment. Positions 276–278 (QLS) are important for selectivity against fructose. Residues 279–280 (QQ) and asparagine 285 contribute to the D-glucose site. The Extracellular portion of the chain corresponds to 290–303 (YSTGIFKDAGVKEP). Residues 304–324 (IYATIGAGVVNTIFTIVSVFL) form a helical membrane-spanning segment. Asparagine 314 is a D-glucose binding site. At 325-330 (VERAGR) the chain is on the cytoplasmic side. A helical transmembrane segment spans residues 331–351 (RTLHLIGLGGMALCSVLMTVS). Residues 352–362 (LLLKDKYDTMS) lie on the Extracellular side of the membrane. The helical transmembrane segment at 363–388 (LVCIAAILIYVAFFEIGPGPIPWFIV) threads the bilayer. Positions 377 and 385 each coordinate D-glucose. Residues 389 to 398 (AELFSQGPRP) lie on the Cytoplasmic side of the membrane. A helical membrane pass occupies residues 399-419 (AAMAVAGCSNWTSNFLVGLLF). The Extracellular segment spans residues 420-428 (PSAAYYLGA). Residues 429–449 (YVFVIFAVFLVAFFIFTFFKV) traverse the membrane as a helical segment. Topologically, residues 450–494 (PETRGRTFEDITRAFEGQAAEANKLGKGPTMEMNSIQPIETTTHV) are cytoplasmic. Residue serine 484 is modified to Phosphoserine. Threonine 491 is modified (phosphothreonine).

The protein belongs to the major facilitator superfamily. Sugar transporter (TC 2.A.1.1) family. Glucose transporter subfamily. As to quaternary structure, interacts with SMIM43; the interaction may promote SLC2A3-mediated glucose transport to meet the energy needs of mesendoderm differentiation. As to expression, detected in stomach, placenta, lung and brain.

It localises to the cell membrane. The protein localises to the perikaryon. Its subcellular location is the cell projection. The enzyme catalyses D-glucose(out) = D-glucose(in). The catalysed reaction is D-galactose(in) = D-galactose(out). Deoxyglucose transport is inhibited by D-glucose, D-galactose and maltose. Galactose transport is inhibited by D-glucose and maltose. In terms of biological role, facilitative glucose transporter. Can also mediate the uptake of various other monosaccharides across the cell membrane. Mediates the uptake of glucose, 2-deoxyglucose, galactose, mannose, xylose and fucose, and probably also dehydroascorbate. Does not mediate fructose transport. Required for mesendoderm differentiation. This Oryctolagus cuniculus (Rabbit) protein is Solute carrier family 2, facilitated glucose transporter member 3.